Here is a 417-residue protein sequence, read N- to C-terminus: Serine hydroxymethyltransferase (417 aa).

Residues Leu120 and 124-126 (GHL) contribute to the (6S)-5,6,7,8-tetrahydrofolate site. Lys229 is modified (N6-(pyridoxal phosphate)lysine). 354 to 356 (SPF) is a binding site for (6S)-5,6,7,8-tetrahydrofolate.

The protein belongs to the SHMT family. In terms of assembly, homodimer. It depends on pyridoxal 5'-phosphate as a cofactor.

Its subcellular location is the cytoplasm. The catalysed reaction is (6R)-5,10-methylene-5,6,7,8-tetrahydrofolate + glycine + H2O = (6S)-5,6,7,8-tetrahydrofolate + L-serine. The protein operates within one-carbon metabolism; tetrahydrofolate interconversion. It participates in amino-acid biosynthesis; glycine biosynthesis; glycine from L-serine: step 1/1. Functionally, catalyzes the reversible interconversion of serine and glycine with tetrahydrofolate (THF) serving as the one-carbon carrier. This reaction serves as the major source of one-carbon groups required for the biosynthesis of purines, thymidylate, methionine, and other important biomolecules. Also exhibits THF-independent aldolase activity toward beta-hydroxyamino acids, producing glycine and aldehydes, via a retro-aldol mechanism. In Acinetobacter baylyi (strain ATCC 33305 / BD413 / ADP1), this protein is Serine hydroxymethyltransferase.